The primary structure comprises 426 residues: Phosphoribosylamine--glycine ligase (426 aa).

The ATP-grasp domain maps to 107-313 (KDFMQKYGVK…FLNVINSALN (207 aa)). Position 133-194 (133-194 (LDKISYPVVI…EEFLDGVEIS (62 aa))) interacts with ATP. Glutamate 283 and asparagine 285 together coordinate Mg(2+).

It belongs to the GARS family. Mg(2+) serves as cofactor. It depends on Mn(2+) as a cofactor.

The catalysed reaction is 5-phospho-beta-D-ribosylamine + glycine + ATP = N(1)-(5-phospho-beta-D-ribosyl)glycinamide + ADP + phosphate + H(+). The protein operates within purine metabolism; IMP biosynthesis via de novo pathway; N(1)-(5-phospho-D-ribosyl)glycinamide from 5-phospho-alpha-D-ribose 1-diphosphate: step 2/2. This chain is Phosphoribosylamine--glycine ligase, found in Fusobacterium nucleatum subsp. nucleatum (strain ATCC 25586 / DSM 15643 / BCRC 10681 / CIP 101130 / JCM 8532 / KCTC 2640 / LMG 13131 / VPI 4355).